The chain runs to 331 residues: Ketol-acid reductoisomerase (NADP(+)) (331 aa).

The KARI N-terminal Rossmann domain occupies 2 to 182 (AKMYYDQDAD…GGTKAGAIET (181 aa)). NADP(+)-binding positions include 25–28 (FGSQ), Ser51, Ser53, and 83–86 (DEKQ). Residue His108 is part of the active site. Position 134 (Gly134) interacts with NADP(+). The KARI C-terminal knotted domain maps to 183–328 (TFKEETETDL…KSLREMMPWL (146 aa)). Asp191, Glu195, Glu227, and Glu231 together coordinate Mg(2+). Ser252 serves as a coordination point for substrate.

This sequence belongs to the ketol-acid reductoisomerase family. Requires Mg(2+) as cofactor.

It carries out the reaction (2R)-2,3-dihydroxy-3-methylbutanoate + NADP(+) = (2S)-2-acetolactate + NADPH + H(+). The catalysed reaction is (2R,3R)-2,3-dihydroxy-3-methylpentanoate + NADP(+) = (S)-2-ethyl-2-hydroxy-3-oxobutanoate + NADPH + H(+). Its pathway is amino-acid biosynthesis; L-isoleucine biosynthesis; L-isoleucine from 2-oxobutanoate: step 2/4. It functions in the pathway amino-acid biosynthesis; L-valine biosynthesis; L-valine from pyruvate: step 2/4. Its function is as follows. Involved in the biosynthesis of branched-chain amino acids (BCAA). Catalyzes an alkyl-migration followed by a ketol-acid reduction of (S)-2-acetolactate (S2AL) to yield (R)-2,3-dihydroxy-isovalerate. In the isomerase reaction, S2AL is rearranged via a Mg-dependent methyl migration to produce 3-hydroxy-3-methyl-2-ketobutyrate (HMKB). In the reductase reaction, this 2-ketoacid undergoes a metal-dependent reduction by NADPH to yield (R)-2,3-dihydroxy-isovalerate. The polypeptide is Ketol-acid reductoisomerase (NADP(+)) (Caldanaerobacter subterraneus subsp. tengcongensis (strain DSM 15242 / JCM 11007 / NBRC 100824 / MB4) (Thermoanaerobacter tengcongensis)).